We begin with the raw amino-acid sequence, 575 residues long: Melatonin-related receptor (575 aa).

At 1–30 (MGRTLAVPTPYGCIGCKLPQPDYPPALIVF) the chain is on the extracellular side. Residues 31–51 (MFCAMVITIVVDLIGNSMVIL) form a helical membrane-spanning segment. At 52–64 (AVSKNKKLRNSGN) the chain is on the cytoplasmic side. The helical transmembrane segment at 65 to 85 (VFVVSLSVADMLVAIYPYPLM) threads the bilayer. Residues 86–103 (LHAMAIGGWDLSKLQCQM) are Extracellular-facing. The cysteines at positions 101 and 178 are disulfide-linked. A helical membrane pass occupies residues 104–124 (VGFITGLSVVGSIFNIMAIAI). At 125-143 (NRYCYICHSLQYERIFSVR) the chain is on the cytoplasmic side. Residues 144–164 (NTCIYLAVTWIMTVLAVLPNM) form a helical membrane-spanning segment. At 165 to 188 (YIGTIEYDPRTYTCIFNYVNNPAF) the chain is on the extracellular side. A helical membrane pass occupies residues 189 to 209 (AVTIVCIHFVLPLLIVGFCYV). The Cytoplasmic segment spans residues 210–239 (KIWTKVLAARDPAGQNPDNQLAEVRNFLTM). The chain crosses the membrane as a helical span at residues 240 to 260 (FVIFLLFAVCWCPINALTVLV). Residues 261–273 (AVNPKEMAGKIPN) are Extracellular-facing. The chain crosses the membrane as a helical span at residues 274–294 (WVYLAAYFIAYFNSCLNAVIY). Over 295–575 (GVLNENFRRE…VDADSDEMAV (281 aa)) the chain is Cytoplasmic. Disordered regions lie at residues 368 to 421 (VPLP…TVYP) and 446 to 474 (SSHP…TGYT). The segment covering 455–474 (PSKTAISPATSFPKPTTGYT) has biased composition (polar residues).

It belongs to the G-protein coupled receptor 1 family. As to quaternary structure, homodimer, and heterodimer with MTNR1A and MTNR1B. Interacts with KAT5. Interacts with RTN4 isoform A/NOGO-A. Interacts with TGFBR1.

It localises to the cell membrane. Its function is as follows. G protein-coupled receptor that plays a role in numerous physiological processes including regulation of energy metabolism, neurite outgrowth or cell migration. Promotes self-renewal and neuronal differentiation of neural progenitor cells through activation of the NOTCH and WNT/beta-catenin signaling pathways. Modulates the KAT5-dependent glucocorticoid receptor signaling by modulating KAT5 subcellular compartmentalisation. Also plays a role in the activation TGFBR1 in the absence of TGFBR2 by interfering with FKBP1A binding to TGFBR1, leading to induction of both canonical and non-canonical SMAD signaling pathways resulting in inhibition of proliferation or promotion of migration. The sequence is that of Melatonin-related receptor (GPR50) from Ovis aries (Sheep).